A 385-amino-acid chain; its full sequence is Chorismate synthase (385 aa).

NADP(+) contacts are provided by R40 and R46. FMN-binding positions include 128-130 (RAS), 248-249 (QA), G293, 308-312 (KAIPS), and R334.

This sequence belongs to the chorismate synthase family. Homotetramer. Requires FMNH2 as cofactor.

The catalysed reaction is 5-O-(1-carboxyvinyl)-3-phosphoshikimate = chorismate + phosphate. Its pathway is metabolic intermediate biosynthesis; chorismate biosynthesis; chorismate from D-erythrose 4-phosphate and phosphoenolpyruvate: step 7/7. In terms of biological role, catalyzes the anti-1,4-elimination of the C-3 phosphate and the C-6 proR hydrogen from 5-enolpyruvylshikimate-3-phosphate (EPSP) to yield chorismate, which is the branch point compound that serves as the starting substrate for the three terminal pathways of aromatic amino acid biosynthesis. This reaction introduces a second double bond into the aromatic ring system. The chain is Chorismate synthase from Endomicrobium trichonymphae.